The chain runs to 22 residues: MICOS complex subunit MIC60 (22 aa).

It belongs to the MICOS complex subunit Mic60 family. In terms of assembly, component of the mitochondrial contact site and cristae organizing system (MICOS) complex, composed of at least MICOS10/MIC10, CHCHD3/MIC19, CHCHD6/MIC25, APOOL/MIC27, IMMT/MIC60, APOO/MIC23/MIC26 and MICOS13/MIC13. This complex was also known under the names MINOS or MitOS complex. The MICOS complex associates with mitochondrial outer membrane proteins SAMM50, MTX1 and MTX2 (together described as components of the mitochondrial outer membrane sorting assembly machinery (SAM) complex) and DNAJC11, mitochondrial inner membrane protein TMEM11 and with HSPA9. The MICOS and SAM complexes together with DNAJC11 are part of a large protein complex spanning both membranes termed the mitochondrial intermembrane space bridging (MIB) complex. Interacts with HSPA1A/HSPA1B and OPA1, preferentially with the soluble OPA1 form. Interacts with MICOS13/MIC13, MICOS10/MIC10, CHCHD3/MIC19, CHCHD6/MIC25, SAMM50 and TMEM11. Interacts with APOO/MIC23/MIC26 and APOOL/MIC27. Interacts with ARMC1. Interacts with ARMC12.

It localises to the mitochondrion inner membrane. The protein resides in the mitochondrion. In terms of biological role, component of the MICOS complex, a large protein complex of the mitochondrial inner membrane that plays crucial roles in the maintenance of crista junctions, inner membrane architecture, and formation of contact sites to the outer membrane. Plays an important role in the maintenance of the MICOS complex stability and the mitochondrial cristae morphology. In Mesocricetus auratus (Golden hamster), this protein is MICOS complex subunit MIC60.